A 148-amino-acid chain; its full sequence is Protein RESISTANCE TO POWDERY MILDEW 8.1 (148 aa).

An RPW8 domain is found at 1–148 (MPIGELAIGA…VISACSKIRA (148 aa)). Residues 7–23 (AIGAVLGVGAQAIYDRF) form a helical membrane-spanning segment. Residues 120–140 (DDIKEIKAKISEMDTKLAEVI) are a coiled coil.

It belongs to the plant RPW8 protein family.

Its subcellular location is the membrane. In terms of biological role, disease resistance (R) protein that induces localized, salicylic acid-dependent defenses. Confers resistance to powdery mildew (e.g. Erysiphe cichoracearum UCSC1). The sequence is that of Protein RESISTANCE TO POWDERY MILDEW 8.1 from Arabidopsis thaliana (Mouse-ear cress).